The primary structure comprises 875 residues: Neurotrypsin (875 aa).

An N-terminal signal peptide occupies residues Met1–Xaa20. Asn26 carries N-linked (GlcNAc...) asparagine glycosylation. Residues His31–Pro88 are disordered. The segment covering Thr56 to Ala71 has biased composition (pro residues). The Kringle domain occupies Cys93–Cys165. 20 cysteine pairs are disulfide-bonded: Cys93-Cys165, Cys109-Cys149, Cys138-Cys163, Cys195-Cys259, Cys208-Cys269, Cys239-Cys249, Cys305-Cys369, Cys318-Cys379, Cys349-Cys359, Cys412-Cys475, Cys425-Cys485, Cys455-Cys465, Cys525-Cys589, Cys538-Cys599, Cys569-Cys579, Cys619-Cys750, Cys661-Cys677, Cys765-Cys831, Cys794-Cys808, and Cys821-Cys850. 4 SRCR domains span residues Ile170 to Phe271, Ile280 to Pro381, Ile387 to Pro487, and Val500 to Tyr601. Residues Cys619 to Arg630 are zymogen activation region. Residues Ile631 to Lys874 enclose the Peptidase S1 domain. The active-site Charge relay system is the His676. N-linked (GlcNAc...) asparagine glycosylation occurs at Asn683. Catalysis depends on Asp726, which acts as the Charge relay system. Ser825 (charge relay system) is an active-site residue.

It belongs to the peptidase S1 family.

The protein localises to the secreted. In terms of biological role, plays a role in neuronal plasticity and the proteolytic action may subserve structural reorganizations associated with learning and memory operations. This is Neurotrypsin (PRSS12) from Nomascus leucogenys (Northern white-cheeked gibbon).